Consider the following 157-residue polypeptide: Large ribosomal subunit protein eL21 (157 aa).

The disordered stretch occupies residues Gln-110 to Pro-132.

The protein belongs to the eukaryotic ribosomal protein eL21 family.

This chain is Large ribosomal subunit protein eL21 (RPL21), found in Tetrahymena thermophila (strain SB210).